The chain runs to 706 residues: Lysophospholipase 2 (706 aa).

Positions 1-19 (MQLRNILQASSLISGLSLA) are cleaved as a signal peptide. The PLA2c domain occupies 36 to 588 (PCPSDDTSLV…ADYCWNGTLS (553 aa)). Residues asparagine 47, asparagine 80, asparagine 94, asparagine 125, asparagine 162, asparagine 181, asparagine 193, asparagine 217, asparagine 279, asparagine 309, asparagine 365, asparagine 390, asparagine 491, asparagine 515, asparagine 524, asparagine 543, asparagine 567, asparagine 584, asparagine 598, asparagine 630, asparagine 634, asparagine 642, asparagine 648, asparagine 652, and asparagine 658 are each glycosylated (N-linked (GlcNAc...) asparagine). Residues 627 to 672 (TSGNTTSNSTTSTSSNVTSNSNSSSNTTLNSNSSSSSISSSTARSS) form a disordered region. Asparagine 680 carries GPI-anchor amidated asparagine lipidation. Residues 681–706 (AAAISYANTNTLMSLLGAITALFGLI) constitute a propeptide, removed in mature form.

This sequence belongs to the lysophospholipase family. The GPI-anchor is attached to the protein in the endoplasmic reticulum and serves to target the protein to the cell surface. There, the glucosamine-inositol phospholipid moiety is cleaved off and the GPI-modified mannoprotein is covalently attached via its lipidless GPI glycan remnant to the 1,6-beta-glucan of the outer cell wall layer.

It localises to the secreted. Its subcellular location is the cell wall. The protein resides in the membrane. The catalysed reaction is a 1-acyl-sn-glycero-3-phosphocholine + H2O = sn-glycerol 3-phosphocholine + a fatty acid + H(+). The enzyme catalyses 1-hexadecanoyl-sn-glycero-3-phosphoethanolamine + H2O = sn-glycero-3-phosphoethanolamine + hexadecanoate + H(+). It catalyses the reaction 1-hexadecanoyl-sn-glycero-3-phosphocholine + H2O = sn-glycerol 3-phosphocholine + hexadecanoate + H(+). It carries out the reaction 1-hexadecanoyl-sn-glycero-3-phospho-L-serine + H2O = sn-glycero-3-phospho-L-serine + hexadecanoate + H(+). The catalysed reaction is 1,2-dihexadecanoyl-sn-glycero-3-phosphocholine + H2O = 1-hexadecanoyl-sn-glycero-3-phosphocholine + hexadecanoate + H(+). In terms of biological role, sequentially removes both fatty acyl groups from diacylglycerophospholipids and therefore has both phospholipase A and lysophospholipase activities. However, it does not display transacylase activity. Substrate preference is phosphatidylserine &gt; phosphatidylinositol &gt; phosphatidylcholine &gt; phosphatidylethanolamine. The substrate specificity is pH- and ion-dependent. In contrast with activities observed at optimum pH 3.5, the order of substrate preference at pH 5.5 is phosphatidylserine = phosphatidylethanolamine &gt; phosphatidylcholine &gt; phosphatidylinositol. In Saccharomyces cerevisiae (strain ATCC 204508 / S288c) (Baker's yeast), this protein is Lysophospholipase 2 (PLB2).